The sequence spans 344 residues: N-acetyl-gamma-glutamyl-phosphate reductase (344 aa).

The active site involves C150.

Belongs to the NAGSA dehydrogenase family. Type 1 subfamily.

It localises to the cytoplasm. The catalysed reaction is N-acetyl-L-glutamate 5-semialdehyde + phosphate + NADP(+) = N-acetyl-L-glutamyl 5-phosphate + NADPH + H(+). Its pathway is amino-acid biosynthesis; L-arginine biosynthesis; N(2)-acetyl-L-ornithine from L-glutamate: step 3/4. In terms of biological role, catalyzes the NADPH-dependent reduction of N-acetyl-5-glutamyl phosphate to yield N-acetyl-L-glutamate 5-semialdehyde. The chain is N-acetyl-gamma-glutamyl-phosphate reductase from Pseudomonas syringae pv. syringae (strain B728a).